Consider the following 197-residue polypeptide: Phosphoheptose isomerase (197 aa).

The 158-residue stretch at 40 to 197 (CIASIAQGGK…LVEHSIFGKQ (158 aa)) folds into the SIS domain. 55-57 (NGG) lines the substrate pocket. The Zn(2+) site is built by histidine 64 and glutamate 68. Substrate is bound by residues glutamate 68, 97 to 98 (ND), 123 to 125 (STS), serine 128, and glutamine 175. Zn(2+) contacts are provided by glutamine 175 and histidine 183.

It belongs to the SIS family. GmhA subfamily. As to quaternary structure, homotetramer. Zn(2+) serves as cofactor.

The protein localises to the cytoplasm. The enzyme catalyses 2 D-sedoheptulose 7-phosphate = D-glycero-alpha-D-manno-heptose 7-phosphate + D-glycero-beta-D-manno-heptose 7-phosphate. It participates in carbohydrate biosynthesis; D-glycero-D-manno-heptose 7-phosphate biosynthesis; D-glycero-alpha-D-manno-heptose 7-phosphate and D-glycero-beta-D-manno-heptose 7-phosphate from sedoheptulose 7-phosphate: step 1/1. Its pathway is capsule biogenesis; capsule polysaccharide biosynthesis. Functionally, catalyzes the isomerization of sedoheptulose 7-phosphate in D-glycero-D-manno-heptose 7-phosphate. This chain is Phosphoheptose isomerase, found in Burkholderia mallei (strain ATCC 23344).